We begin with the raw amino-acid sequence, 628 residues long: ATP-binding cassette sub-family F member 2 (628 aa).

Positions 1–57 (MPSDLAKKKAAKKKEAAKARQRPRKGHEENGDAVTEPQVAEEKIEEANGRETTGDGE) are disordered. Residues 40 to 53 (AEEKIEEANGRETT) are compositionally biased toward basic and acidic residues. 2 consecutive ABC transporter domains span residues 91–330 (VHII…ENQM) and 401–618 (IMVQ…VDEE). 123–130 (GLNGIGKS) lines the ATP pocket. Position 223 is a phosphothreonine (threonine 223). Lysine 309 is modified (N6-acetyllysine). Residue 435-442 (GPNGAGKS) coordinates ATP. A Phosphoserine modification is found at serine 517.

Belongs to the ABC transporter superfamily. ABCF family. EF3 subfamily.

This Mus musculus (Mouse) protein is ATP-binding cassette sub-family F member 2.